Consider the following 341-residue polypeptide: Adenine deaminase (341 aa).

H24, H26, and H204 together coordinate Zn(2+). E207 serves as the catalytic Proton donor. D285 lines the Zn(2+) pocket. D286 is a substrate binding site.

This sequence belongs to the metallo-dependent hydrolases superfamily. Adenosine and AMP deaminases family. Adenine deaminase type 2 subfamily. The cofactor is Zn(2+).

The catalysed reaction is adenine + H2O + H(+) = hypoxanthine + NH4(+). Its function is as follows. Catalyzes the hydrolytic deamination of adenine to hypoxanthine. Plays an important role in the purine salvage pathway and in nitrogen catabolism. The polypeptide is Adenine deaminase (Sphingopyxis alaskensis (strain DSM 13593 / LMG 18877 / RB2256) (Sphingomonas alaskensis)).